Here is a 321-residue protein sequence, read N- to C-terminus: Acetyl-coenzyme A carboxylase carboxyl transferase subunit alpha (321 aa).

Residues 37–298 (DLDDEIKRLQ…KQRILSDLED (262 aa)) enclose the CoA carboxyltransferase C-terminal domain.

The protein belongs to the AccA family. Acetyl-CoA carboxylase is a heterohexamer composed of biotin carboxyl carrier protein (AccB), biotin carboxylase (AccC) and two subunits each of ACCase subunit alpha (AccA) and ACCase subunit beta (AccD).

The protein localises to the cytoplasm. The enzyme catalyses N(6)-carboxybiotinyl-L-lysyl-[protein] + acetyl-CoA = N(6)-biotinyl-L-lysyl-[protein] + malonyl-CoA. It functions in the pathway lipid metabolism; malonyl-CoA biosynthesis; malonyl-CoA from acetyl-CoA: step 1/1. In terms of biological role, component of the acetyl coenzyme A carboxylase (ACC) complex. First, biotin carboxylase catalyzes the carboxylation of biotin on its carrier protein (BCCP) and then the CO(2) group is transferred by the carboxyltransferase to acetyl-CoA to form malonyl-CoA. The sequence is that of Acetyl-coenzyme A carboxylase carboxyl transferase subunit alpha from Mannheimia succiniciproducens (strain KCTC 0769BP / MBEL55E).